The chain runs to 227 residues: Orotidine 5'-phosphate decarboxylase (227 aa).

Substrate is bound by residues aspartate 8, lysine 30, 59–68, threonine 118, arginine 178, glutamine 187, glycine 207, and arginine 208; that span reads DLKLYDIPYT. Lysine 61 acts as the Proton donor in catalysis.

This sequence belongs to the OMP decarboxylase family. Type 1 subfamily. In terms of assembly, homodimer.

It catalyses the reaction orotidine 5'-phosphate + H(+) = UMP + CO2. The protein operates within pyrimidine metabolism; UMP biosynthesis via de novo pathway; UMP from orotate: step 2/2. Catalyzes the decarboxylation of orotidine 5'-monophosphate (OMP) to uridine 5'-monophosphate (UMP). In Helicobacter pylori (strain P12), this protein is Orotidine 5'-phosphate decarboxylase.